Reading from the N-terminus, the 94-residue chain is U27-theraphotoxin-Cg1a (94 aa).

The signal sequence occupies residues 1-22 (MIFLLPPVIFVMLLAESVLILG). A propeptide spanning residues 23 to 58 (DSEDADLMEMVQMSRPFFNPIIPAVEFVDLREERQR) is cleaved from the precursor. Cystine bridges form between Cys-60-Cys-78, Cys-67-Cys-83, and Cys-77-Cys-88.

It belongs to the neurotoxin 14 (magi-1) family. OAIP-1 subfamily. Expressed by the venom gland.

The protein localises to the secreted. Its function is as follows. Probable ion channel inhibitor. This chain is U27-theraphotoxin-Cg1a, found in Chilobrachys guangxiensis (Chinese earth tiger tarantula).